We begin with the raw amino-acid sequence, 215 residues long: Leucyl/phenylalanyl-tRNA--protein transferase (215 aa).

The protein belongs to the L/F-transferase family.

Its subcellular location is the cytoplasm. The enzyme catalyses N-terminal L-lysyl-[protein] + L-leucyl-tRNA(Leu) = N-terminal L-leucyl-L-lysyl-[protein] + tRNA(Leu) + H(+). It catalyses the reaction N-terminal L-arginyl-[protein] + L-leucyl-tRNA(Leu) = N-terminal L-leucyl-L-arginyl-[protein] + tRNA(Leu) + H(+). It carries out the reaction L-phenylalanyl-tRNA(Phe) + an N-terminal L-alpha-aminoacyl-[protein] = an N-terminal L-phenylalanyl-L-alpha-aminoacyl-[protein] + tRNA(Phe). Functionally, functions in the N-end rule pathway of protein degradation where it conjugates Leu, Phe and, less efficiently, Met from aminoacyl-tRNAs to the N-termini of proteins containing an N-terminal arginine or lysine. This Campylobacter jejuni subsp. jejuni serotype O:2 (strain ATCC 700819 / NCTC 11168) protein is Leucyl/phenylalanyl-tRNA--protein transferase.